Here is a 353-residue protein sequence, read N- to C-terminus: Chemerin-like receptor 2 (353 aa).

The Extracellular portion of the chain corresponds to 1–41 (MEVSKEMLFEELDNYSYALDYYSQESDPEEKVYLGLVHWIS). The N-linked (GlcNAc...) asparagine glycan is linked to Asn-14. The helical transmembrane segment at 42 to 62 (LFLYALAFVLGIPGNAIVIWL) threads the bilayer. At 63-73 (MGFKWKKTVTT) the chain is on the cytoplasmic side. The chain crosses the membrane as a helical span at residues 74 to 94 (LWFLNLAIADFIFVLFLPLYI). Topologically, residues 95 to 112 (SYVALSFHWPFGLWLCKV) are extracellular. Residues Cys-110 and Cys-187 are joined by a disulfide bond. A helical transmembrane segment spans residues 113 to 133 (NSFIAQLNMFSSVFFLTVISL). Topologically, residues 134–154 (DRYIHLLHPGLSHRHRTLKSS) are cytoplasmic. Residues 155–175 (LVVVILVWLLASLLGGPTLYF) form a helical membrane-spanning segment. At 176-210 (RDTMEVNNHIICYNNFQEHELTLMRHHVLTWVKFL) the chain is on the extracellular side. Residues 211-231 (FGYLFPLLTMSSCYLCLIFKM) traverse the membrane as a helical segment. Residues 232–247 (KKRNILISRKHLWMIL) lie on the Cytoplasmic side of the membrane. The helical transmembrane segment at 248–268 (SVVIAFLVCWTPYHLFSIWEL) threads the bilayer. Residues 269–286 (SIHHNSSFQNVLQGGIPL) lie on the Extracellular side of the membrane. Residues 287 to 307 (STGLAFLNSCLNPILYVLISK) traverse the membrane as a helical segment. Topologically, residues 308–353 (TFQARFRASVAEVLKRSLWEASCSGTVSEQLRSAETKSLSLLETAQ) are cytoplasmic.

It belongs to the chemokine-like receptor (CMKLR) family. As to expression, high expressed in white adipose tissue and skeletal muscle. Expressed in hippocampus and cortex.

The protein localises to the cell membrane. In terms of biological role, receptor for chemoattractant adipokine chemerin/RARRES2 suggesting a role for this receptor in the regulation of inflammation and energy homesotasis. Signals mainly via beta-arrestin pathway. Binding of RARRES2 activates weakly G proteins, calcium mobilization and MAPK1/MAPK3 (ERK1/2) phosphorylation too. Acts also as a receptor for TAFA1, mediates its effects on neuronal stem-cell proliferation and differentiation via the activation of ROCK/ERK and ROCK/STAT3 signaling pathway. The polypeptide is Chemerin-like receptor 2 (Cmklr2) (Mus musculus (Mouse)).